The chain runs to 908 residues: Hyphal wall protein 2 (908 aa).

An N-terminal signal peptide occupies residues 1 to 20 (MRFATTQLATLACFILTAEA). 3 stretches are compositionally biased toward low complexity: residues 110-187 (PKTA…TTSK), 266-324 (ESTT…TMKH), and 332-405 (HATT…KSST). Disordered stretches follow at residues 110-221 (PKTA…PSKT) and 263-477 (TETE…IPKY). A compositionally biased stretch (polar residues) spans 406–416 (PASTLEYSTSI). Residues 422-477 (TTSNSLSTKSTTLTTISRSSTSGSSVPNTTRESSTSTTTPNSSSSESKVSSAIPKY) are compositionally biased toward low complexity. N-linked (GlcNAc...) asparagine glycans are attached at residues asparagine 449, asparagine 462, and asparagine 519. A compositionally biased stretch (low complexity) spans 539–608 (GTTVRSSTSE…TSTTTPESSP (70 aa)). The interval 539–700 (GTTVRSSTSE…TSASETSSGS (162 aa)) is disordered. Residues 624-638 (TMESSASTTKNSSIQ) are compositionally biased toward polar residues. N-linked (GlcNAc...) asparagine glycosylation occurs at asparagine 634. Composition is skewed to low complexity over residues 639 to 655 (STSE…ESSV) and 662 to 677 (SSVP…VVTT). A glycan (N-linked (GlcNAc...) asparagine) is linked at asparagine 684. A compositionally biased stretch (low complexity) spans 685–700 (TTLEHSTSASETSSGS). Asparagine 764 is a glycosylation site (N-linked (GlcNAc...) asparagine). The segment at 821–844 (VSTDVKPTTSSQGTKSTPVDTDSK) is disordered. Residue glycine 887 is the site of GPI-anchor amidated glycine attachment. Residues 888–908 (TGNNMKLSFGVVIAGVAAFAI) constitute a propeptide, removed in mature form.

Post-translationally, the GPI-anchor is attached to the protein in the endoplasmic reticulum and serves to target the protein to the cell surface. There, the glucosamine-inositol phospholipid moiety is cleaved off and the GPI-modified mannoprotein is covalently attached via its lipidless GPI glycan remnant to the 1,6-beta-glucan of the outer cell wall layer.

It localises to the secreted. The protein localises to the cell wall. It is found in the membrane. Its function is as follows. GPI-anchored cell wall protein required for mating efficiency, biofilm formation, adhesion, filamentous growth, and oxidative stress tolerance. Involved in normal disseminated infection in a mouse systemic candidiasis model. The polypeptide is Hyphal wall protein 2 (HWP2) (Candida albicans (strain SC5314 / ATCC MYA-2876) (Yeast)).